A 100-amino-acid polypeptide reads, in one-letter code: Pancreatic polypeptide prohormone (100 aa).

An N-terminal signal peptide occupies residues 1 to 29 (MAVAYCCLSLFLVSTWVALLLQPLQGTWG). Tyrosine amide is present on Tyr65.

The protein belongs to the NPY family. Post-translationally, no icosapeptide-like peptide is cleaved from the C-terminal.

Its subcellular location is the secreted. Functionally, hormone secreted by pancreatic cells that acts as a regulator of pancreatic and gastrointestinal functions probably by signaling through the G protein-coupled receptor NPY4R2. The protein is Pancreatic polypeptide prohormone (Ppy) of Mus musculus (Mouse).